A 134-amino-acid chain; its full sequence is kinetoplast-associated protein 3 (134 aa).

Positions 1–10 (MLRRSPTLLR) are excised as a propeptide. Residues 106–124 (PKAPKAAKSASSKVKTAAK) show a composition bias toward low complexity. The segment at 106–134 (PKAPKAAKSASSKVKTAAKTAKKTTAARK) is disordered. Over residues 125 to 134 (TAKKTTAARK) the composition is skewed to basic residues.

Belongs to the KAP family. Associates with the kinetoplast DNA network.

The protein localises to the mitochondrion matrix. It is found in the kinetoplast. Functionally, histone H1-like DNA-binding protein involved in the organization and segregation of kinetoplast DNA (kDNA). The mitochondrial DNA of kinetoplastid protozoa consists of about 5,000 minicircles and 20 to 30 maxicircles. These circular DNAs are held together by catenation into a highly organized compact disk structure referred to as a kinetoplast DNA (kDNA) network. Binds preferentially to a specific fragment of minicircle DNA and is able to compact kDNA networks through DNA charge neutralization and condensation. The chain is kinetoplast-associated protein 3 (KAP3) from Crithidia fasciculata.